The following is a 94-amino-acid chain: Co-chaperonin GroES (94 aa).

The protein belongs to the GroES chaperonin family. Heptamer of 7 subunits arranged in a ring. Interacts with the chaperonin GroEL.

Its subcellular location is the cytoplasm. Its function is as follows. Together with the chaperonin GroEL, plays an essential role in assisting protein folding. The GroEL-GroES system forms a nano-cage that allows encapsulation of the non-native substrate proteins and provides a physical environment optimized to promote and accelerate protein folding. GroES binds to the apical surface of the GroEL ring, thereby capping the opening of the GroEL channel. The chain is Co-chaperonin GroES from Streptococcus pneumoniae (strain CGSP14).